Reading from the N-terminus, the 308-residue chain is D-alanine--D-alanine ligase B (308 aa).

Residues 102-302 enclose the ATP-grasp domain; sequence KKVAAAAGVV…FAELLSWMVE (201 aa). 128–183 lines the ATP pocket; the sequence is PMKPPYVVKPVREGSSFGVVIVKEDQPHPPQVIGSADWKYGDEVMVEGYIAGRELT. Mg(2+) contacts are provided by D252, E269, and N271.

The protein belongs to the D-alanine--D-alanine ligase family. The cofactor is Mg(2+). It depends on Mn(2+) as a cofactor.

The protein localises to the cytoplasm. It catalyses the reaction 2 D-alanine + ATP = D-alanyl-D-alanine + ADP + phosphate + H(+). Its pathway is cell wall biogenesis; peptidoglycan biosynthesis. Its function is as follows. Cell wall formation. This Brucella suis biovar 1 (strain 1330) protein is D-alanine--D-alanine ligase B.